The chain runs to 204 residues: bMERB domain-containing protein 1 (204 aa).

The region spanning 3–150 (LKQSLSTHLE…EQEEDKEMAD (148 aa)) is the bMERB domain. Positions 162–187 (VTKSPASSRAEKKAEPPPSKPTVAKT) are disordered.

This Pongo abelii (Sumatran orangutan) protein is bMERB domain-containing protein 1 (BMERB1).